We begin with the raw amino-acid sequence, 403 residues long: Phosphopentomutase (403 aa).

The Mn(2+) site is built by Asp13, Asp298, His303, Asp339, His340, and His351.

It belongs to the phosphopentomutase family. Mn(2+) is required as a cofactor.

It localises to the cytoplasm. The enzyme catalyses 2-deoxy-alpha-D-ribose 1-phosphate = 2-deoxy-D-ribose 5-phosphate. The catalysed reaction is alpha-D-ribose 1-phosphate = D-ribose 5-phosphate. Its pathway is carbohydrate degradation; 2-deoxy-D-ribose 1-phosphate degradation; D-glyceraldehyde 3-phosphate and acetaldehyde from 2-deoxy-alpha-D-ribose 1-phosphate: step 1/2. Functionally, isomerase that catalyzes the conversion of deoxy-ribose 1-phosphate (dRib-1-P) and ribose 1-phosphate (Rib-1-P) to deoxy-ribose 5-phosphate (dRib-5-P) and ribose 5-phosphate (Rib-5-P), respectively. This Streptococcus uberis (strain ATCC BAA-854 / 0140J) protein is Phosphopentomutase.